The chain runs to 651 residues: DNA mismatch repair protein MutL (651 aa).

Residues 383 to 405 (TAAEEPTPAPTSPDLEIGDLDDQ) are disordered.

It belongs to the DNA mismatch repair MutL/HexB family.

Its function is as follows. This protein is involved in the repair of mismatches in DNA. It is required for dam-dependent methyl-directed DNA mismatch repair. May act as a 'molecular matchmaker', a protein that promotes the formation of a stable complex between two or more DNA-binding proteins in an ATP-dependent manner without itself being part of a final effector complex. In Lacticaseibacillus casei (strain BL23) (Lactobacillus casei), this protein is DNA mismatch repair protein MutL.